The sequence spans 543 residues: Protein male-specific lethal-3 (543 aa).

The Chromo domain maps to 10–90; the sequence is LFNRGEKVLC…KLQRELAEAA (81 aa). The interval 93–247 is disordered; it reads QKTGGYSYKD…THTTDAEKRI (155 aa). Composition is skewed to basic and acidic residues over residues 180–202, 210–224, and 234–247; these read RSRD…DNSS, KSKG…ERRS, and SPKD…EKRI. An MRG domain is found at 249–542; that stretch reads QEDRVMLRIS…PLIDQGRELS (294 aa).

In terms of assembly, component of the male-specific lethal (MSL) histone acetyltransferase complex, composed of mof, mle, msl-1, msl-2 and msl-3 proteins, as well as roX1 and roX2 non-coding RNAs. Ubiquitinated by msl-2.

The protein resides in the nucleus. It localises to the chromosome. In terms of biological role, component of the male-specific lethal (MSL) histone acetyltransferase complex, a multiprotein complex essential for elevating transcription of the single X chromosome in the male (X chromosome dosage compensation). The MSL complex specifically associates with the single X chromosome in males and mediates formation of H4K16ac, promoting a two-fold activation of X chromosome. Acts as a histone reader that specifically recognizes and binds histone H3 trimethylated at 'Lys-36' (H3K36me3) and histone H4 monomethylated at 'Lys-20' (H4K20me1). Within the MSL complex, mediates the spreading of the MSL complex from initiation sites on the male X chromosome to flanking chromatin. Following initial recruitment of the MSL complex to male X chromosome by msl-2, msl-3 binds H3K36me3 and promotes spreading of the MSL complex in cis. In addition to its role in dosage compensation in males, promotes germline stem cell differentiation in females: recognizes and binds H3K36me3, promoting recruitment of the ATAC complex and transcription of genes, such as RpS19b. The polypeptide is Protein male-specific lethal-3 (msl-3) (Drosophila virilis (Fruit fly)).